The following is a 98-amino-acid chain: Defensin (98 aa).

Intrachain disulfides connect Cys61-Cys88, Cys74-Cys94, and Cys78-Cys96.

This sequence belongs to the invertebrate defensin family. Type 1 subfamily.

The protein is Defensin of Mamestra brassicae (Cabbage moth).